The sequence spans 277 residues: Small ribosomal subunit protein uS2 (277 aa).

A disordered region spans residues 255–277 (AVATTDEASAPSAAATETTTEEG). Positions 257–277 (ATTDEASAPSAAATETTTEEG) are enriched in low complexity.

The protein belongs to the universal ribosomal protein uS2 family.

In Mycobacteroides abscessus (strain ATCC 19977 / DSM 44196 / CCUG 20993 / CIP 104536 / JCM 13569 / NCTC 13031 / TMC 1543 / L948) (Mycobacterium abscessus), this protein is Small ribosomal subunit protein uS2.